We begin with the raw amino-acid sequence, 327 residues long: N-acetyl-gamma-glutamyl-phosphate reductase (327 aa).

The active site involves Cys-136.

This sequence belongs to the NAGSA dehydrogenase family. Type 1 subfamily.

The protein localises to the cytoplasm. It carries out the reaction N-acetyl-L-glutamate 5-semialdehyde + phosphate + NADP(+) = N-acetyl-L-glutamyl 5-phosphate + NADPH + H(+). It functions in the pathway amino-acid biosynthesis; L-arginine biosynthesis; N(2)-acetyl-L-ornithine from L-glutamate: step 3/4. Catalyzes the NADPH-dependent reduction of N-acetyl-5-glutamyl phosphate to yield N-acetyl-L-glutamate 5-semialdehyde. The protein is N-acetyl-gamma-glutamyl-phosphate reductase of Xylella fastidiosa (strain M23).